Reading from the N-terminus, the 188-residue chain is Ion-translocating oxidoreductase complex subunit B (188 aa).

Positions 1–23 are hydrophobic; the sequence is MIEAAVSMSALGLGLGLLLGVAA. Positions 29–88 constitute a 4Fe-4S domain; the sequence is ESPPIVDAIEGILPGTNCGACGYPGCRGLAEAMSEGAAPVTACAPGGRDVALALAAIVET. [4Fe-4S] cluster-binding residues include C46, C49, C54, C71, C113, C116, C119, C123, C143, C146, C149, and C153. 4Fe-4S ferredoxin-type domains are found at residues 104–133 and 134–163; these read TVAFIFEDHCTGCMRCFKRCPTDAIIGANR and QIHTVVTDACIGCNACIEACPTEAIVARVK.

This sequence belongs to the 4Fe4S bacterial-type ferredoxin family. RnfB subfamily. As to quaternary structure, the complex is composed of six subunits: RnfA, RnfB, RnfC, RnfD, RnfE and RnfG. Requires [4Fe-4S] cluster as cofactor.

It localises to the cellular chromatophore membrane. In terms of biological role, part of a membrane-bound complex that couples electron transfer with translocation of ions across the membrane. This chain is Ion-translocating oxidoreductase complex subunit B, found in Cereibacter sphaeroides (strain ATCC 17023 / DSM 158 / JCM 6121 / CCUG 31486 / LMG 2827 / NBRC 12203 / NCIMB 8253 / ATH 2.4.1.) (Rhodobacter sphaeroides).